Reading from the N-terminus, the 1312-residue chain is DNA repair protein RAD50 (1312 aa).

Positions 13, 38, 39, 41, 42, 43, 44, 67, 69, and 159 each coordinate ATP. Threonine 43 provides a ligand contact to Mg(2+). Residue glutamine 159 coordinates Mg(2+). 3 coiled-coil regions span residues 228-359 (TSKE…QADR), 401-598 (RERQ…AKLN), and 635-673 (SQDFESDLDRLKEEIEKSSKQRAMLAGATAVYSQFITQL). At serine 635 the chain carries Phosphoserine; by ATM. One can recognise a Zinc-hook domain in the interval 635-734 (SQDFESDLDR…RRDEMLGLVP (100 aa)). The Zn(2+) site is built by cysteine 681 and cysteine 684. The residue at position 690 (threonine 690) is a Phosphothreonine. Coiled-coil stretches lie at residues 706–734 (RLAPDKLKSTESELKKKEKRRDEMLGLVP) and 789–1079 (LTDV…GRQK). N6-acetyllysine is present on lysine 959.

The protein belongs to the SMC family. RAD50 subfamily. Component of the MRN complex composed of two heterodimers RAD50 and MRE11 associated with a single NBN. The MRN complexes dimerize on DNA to form joined MRN-MRN oligomers required for DNA double-strand break repair. As part of the MRN complex, interacts with MCM8 and MCM9; the interaction recruits the complex to DNA repair sites. Component of the BASC complex, at least composed of BRCA1, MSH2, MSH6, MLH1, ATM, BLM, RAD50, MRE11 and NBN. Found in a complex with TERF2. Interacts with RINT1. Interacts with BRCA1 via its N-terminal domain. Interacts with DCLRE1C/Artemis. Interacts with MRNIP. Interacts with CYREN (via XLF motif). Interacts with C1QBP and MRE11; interaction takes place in absence of DNA damage to form the MRC (MRE11-RAD50-C1QBP) complex that inhibits the activity of MRE11. As to quaternary structure, (Microbial infection) Interacts with herpes simplex virus 1 protein UL12. Requires Zn(2+) as cofactor. Phosphorylation at Ser-635 by ATM in response to DNA damage is required for double-strand break (DSB) repair. Expressed at very low level in most tissues, except in testis where it is expressed at higher level. Expressed in fibroblasts.

It localises to the nucleus. It is found in the chromosome. The protein localises to the telomere. The catalysed reaction is ATP + H2O = ADP + phosphate + H(+). In terms of biological role, component of the MRN complex, which plays a central role in double-strand break (DSB) repair, DNA recombination, maintenance of telomere integrity and meiosis. The MRN complex is involved in the repair of DNA double-strand breaks (DSBs) via homologous recombination (HR), an error-free mechanism which primarily occurs during S and G2 phases. The complex (1) mediates the end resection of damaged DNA, which generates proper single-stranded DNA, a key initial steps in HR, and is (2) required for the recruitment of other repair factors and efficient activation of ATM and ATR upon DNA damage. The MRN complex possesses single-strand endonuclease activity and double-strand-specific 3'-5' exonuclease activity, which are provided by MRE11, to initiate end resection, which is required for single-strand invasion and recombination. Within the complex, RAD50 is both required to bind DNA ends and hold them in close proximity and regulate the activity of MRE11. RAD50 provides an ATP-dependent control of MRE11 by positioning DNA ends into the MRE11 active site: ATP-binding induces a large structural change from an open form with accessible MRE11 nuclease sites into a closed form. The MRN complex is also required for DNA damage signaling via activation of the ATM and ATR kinases: the nuclease activity of MRE11 is not required to activate ATM and ATR. The MRN complex is also required for the processing of R-loops. In telomeres the MRN complex may modulate t-loop formation. The chain is DNA repair protein RAD50 from Homo sapiens (Human).